The sequence spans 195 residues: Thymidine kinase (195 aa).

ATP is bound by residues 15–22 (GPMYSGKS), Glu-23, 57–58 (SH), and 88–91 (DEVQ). The active-site Proton acceptor is the Glu-89. Phe-120 provides a ligand contact to substrate. Positions 145 and 148 each coordinate Zn(2+). Tyr-179 provides a ligand contact to substrate. Residues Cys-183 and Cys-186 each contribute to the Zn(2+) site.

Belongs to the thymidine kinase family.

Its subcellular location is the cytoplasm. It carries out the reaction thymidine + ATP = dTMP + ADP + H(+). In Clostridium acetobutylicum (strain ATCC 824 / DSM 792 / JCM 1419 / IAM 19013 / LMG 5710 / NBRC 13948 / NRRL B-527 / VKM B-1787 / 2291 / W), this protein is Thymidine kinase.